The chain runs to 461 residues: Probable carboxypeptidase MGYG_04702 (461 aa).

A signal peptide spans 1–20 (MQKTYLLALVSLLASSLVEA). Residues N48 and N99 are each glycosylated (N-linked (GlcNAc...) asparagine). D176 contacts Zn(2+). The active-site Proton acceptor is the E208. E209 contributes to the Zn(2+) binding site. Residue N396 is glycosylated (N-linked (GlcNAc...) asparagine).

This sequence belongs to the peptidase M20A family. Zn(2+) is required as a cofactor.

The protein localises to the secreted. The sequence is that of Probable carboxypeptidase MGYG_04702 from Arthroderma gypseum (strain ATCC MYA-4604 / CBS 118893) (Microsporum gypseum).